Reading from the N-terminus, the 487-residue chain is Betaine aldehyde dehydrogenase (487 aa).

The K(+) site is built by I27 and D93. An NAD(+)-binding site is contributed by 149 to 151 (GAW). Catalysis depends on K161, which acts as the Charge relay system. NAD(+) is bound by residues 175 to 178 (KPSE) and 228 to 231 (SVPT). L243 is a K(+) binding site. The active-site Proton acceptor is the E249. The NAD(+) site is built by G251, C283, and E384. C283 serves as the catalytic Nucleophile. Position 283 is a cysteine sulfenic acid (-SOH) (C283). Residues K454 and G457 each coordinate K(+). E461 serves as the catalytic Charge relay system.

This sequence belongs to the aldehyde dehydrogenase family. Dimer of dimers. The cofactor is K(+).

It carries out the reaction betaine aldehyde + NAD(+) + H2O = glycine betaine + NADH + 2 H(+). The protein operates within amine and polyamine biosynthesis; betaine biosynthesis via choline pathway; betaine from betaine aldehyde: step 1/1. Its function is as follows. Involved in the biosynthesis of the osmoprotectant glycine betaine. Catalyzes the irreversible oxidation of betaine aldehyde to the corresponding acid. This chain is Betaine aldehyde dehydrogenase, found in Brucella melitensis biotype 2 (strain ATCC 23457).